Reading from the N-terminus, the 420-residue chain is Exodeoxyribonuclease 7 large subunit (420 aa).

This sequence belongs to the XseA family. Heterooligomer composed of large and small subunits.

The protein resides in the cytoplasm. The catalysed reaction is Exonucleolytic cleavage in either 5'- to 3'- or 3'- to 5'-direction to yield nucleoside 5'-phosphates.. In terms of biological role, bidirectionally degrades single-stranded DNA into large acid-insoluble oligonucleotides, which are then degraded further into small acid-soluble oligonucleotides. In Helicobacter pylori (strain P12), this protein is Exodeoxyribonuclease 7 large subunit.